A 309-amino-acid polypeptide reads, in one-letter code: tRNA dimethylallyltransferase (309 aa).

11–18 (GPTASGKS) is an ATP binding site. Position 13 to 18 (13 to 18 (TASGKS)) interacts with substrate. Interaction with substrate tRNA stretches follow at residues 36–39 (DSMQ) and 160–164 (QRLIR).

This sequence belongs to the IPP transferase family. In terms of assembly, monomer. Mg(2+) serves as cofactor.

The enzyme catalyses adenosine(37) in tRNA + dimethylallyl diphosphate = N(6)-dimethylallyladenosine(37) in tRNA + diphosphate. Functionally, catalyzes the transfer of a dimethylallyl group onto the adenine at position 37 in tRNAs that read codons beginning with uridine, leading to the formation of N6-(dimethylallyl)adenosine (i(6)A). The chain is tRNA dimethylallyltransferase from Rickettsia felis (strain ATCC VR-1525 / URRWXCal2) (Rickettsia azadi).